The primary structure comprises 414 residues: Eukaryotic initiation factor 4A-3 (414 aa).

A Q motif motif is present at residues 41 to 69 (ESFDDMGLQENLLRGIYAYGFEKPSAIQQ). The region spanning 72 to 242 (IVPFCKGLDV…RKFMNKPVRI (171 aa)) is the Helicase ATP-binding domain. 85 to 92 (AQSGTGKT) contributes to the ATP binding site. Positions 190–193 (DEAD) match the DEAD box motif. The Helicase C-terminal domain occupies 253–414 (GIKQFYVNVE…ELPANVADLL (162 aa)).

Belongs to the DEAD box helicase family. eIF4A subfamily. EIF4F is a multi-subunit complex, the composition of which varies with external and internal environmental conditions. It is composed of at least EIF4A, EIF4E and EIF4G. Interacts with DRM2 (via UBA domains).

The protein resides in the cytoplasm. The protein localises to the nucleus. The catalysed reaction is ATP + H2O = ADP + phosphate + H(+). Functionally, ATP-dependent RNA helicase which is a subunit of the eIF4F complex involved in cap recognition and is required for mRNA binding to ribosome. In the current model of translation initiation, eIF4A unwinds RNA secondary structures in the 5'-UTR of mRNAs which is necessary to allow efficient binding of the small ribosomal subunit, and subsequent scanning for the initiator codon. The chain is Eukaryotic initiation factor 4A-3 from Oryza sativa subsp. japonica (Rice).